The primary structure comprises 1342 residues: Subtilisin-like protease 2 (1342 aa).

A signal peptide spans 1-18; sequence MLNIIYVVSLILIKFIFY. The propeptide at 19–687 is inhibition peptide; sequence KECNNNNNYY…KLYNNKYSFL (669 aa). Disordered regions lie at residues 85 to 111 and 143 to 171; these read EKKT…ENEI and ADVS…NYKN. N-linked (GlcNAc...) asparagine glycosylation is found at Asn165, Asn343, Asn451, Asn455, and Asn493. The tract at residues 415–474 is disordered; the sequence is KKSKKEKENTQQKGGNNPNVDINILNNNNNNNNNNNNNSNNNSNSMNDEEINYNNNNNKE. Over residues 430–474 the composition is skewed to low complexity; it reads NNPNVDINILNNNNNNNNNNNNNSNNNSNSMNDEEINYNNNNNKE. Residues 500–531 form a disordered region; it reads IYHNKNDNSYKNKKEGTGKNNDNNDPNNNNNK. Positions 503 to 516 are enriched in basic and acidic residues; it reads NKNDNSYKNKKEGT. The segment covering 518–531 has biased composition (low complexity); the sequence is KNNDNNDPNNNNNK. N-linked (GlcNAc...) asparagine glycosylation is found at Asn551, Asn642, and Asn729. The Extracellular portion of the chain corresponds to 688-1137; the sequence is NKFLNIEPLI…LYNLYEYDSH (450 aa). Positions 727 to 1020 constitute a Peptidase S8 domain; the sequence is TWNLSIIRVF…DSLVNAEGAV (294 aa). Residues Asp755 and His798 each act as charge relay system in the active site. Asn821, Asn857, Asn893, and Asn951 each carry an N-linked (GlcNAc...) asparagine glycan. The Charge relay system role is filled by Ser961. Asn1010 and Asn1106 each carry an N-linked (GlcNAc...) asparagine glycan. A helical membrane pass occupies residues 1138–1158; it reads YLLASVILFFLALLSIFVGMI. Topologically, residues 1159–1342 are cytoplasmic; sequence YMKSRKHSDK…MNQLDDMFMK (184 aa).

The protein belongs to the peptidase S8 family. In terms of processing, proteolytically cleaved at the N-terminus to generate a 74kDa intermediate which is further processed into a 72kDa form. The first maturation cleavage is autocatalytic, occurs in the ER and is necessary for the subsequent SUB2 trafficking to the microneme. The second cleavage may be mediated by PMX/plasmepsin X.

Its subcellular location is the cell membrane. It is found in the cytoplasmic vesicle. It localises to the secretory vesicle. The protein resides in the microneme membrane. It carries out the reaction Hydrolysis of proteins with broad specificity for peptide bonds, and a preference for a large uncharged residue in P1. Hydrolyzes peptide amides.. Activation may be calcium-dependent. Inhibited by the non-covalent interaction with the cleaved propeptide. Its function is as follows. Serine protease which plays an essential role in the shedding of AMA1, MSP1 and MSP7 from the surface of the invading merozoite; this step is essential for productive invasion and the release of the adhesion between the erythrocyte and the merozoite. May cleave TRAMP/PTTRAMP, thereby shedding TRAMP from the merozoite surface during erythrocyte invasion. In Plasmodium falciparum, this protein is Subtilisin-like protease 2.